A 156-amino-acid polypeptide reads, in one-letter code: MLRQFIVSTVGRRLQLPMMAQSRLASNLDKTEYTTPGEIVDYDDPPHLPVPEYPVRPDEPLETRKQRLLYQSRKRGMLENDLLLSTFVAKHLKDFNAEQTAEYDQLINGVSNDWDIFYWATDTKPTPPQFDTEIMRLLKEHVKNHEKVQRIRQPDL.

A mitochondrion-targeting transit peptide spans 1-24; it reads MLRQFIVSTVGRRLQLPMMAQSRL.

The protein belongs to the SDHAF2 family. As to quaternary structure, interacts with the flavoprotein subunit within the SDH catalytic dimer.

It is found in the mitochondrion matrix. Functionally, plays an essential role in the assembly of succinate dehydrogenase (SDH), an enzyme complex (also referred to as respiratory complex II) that is a component of both the tricarboxylic acid (TCA) cycle and the mitochondrial electron transport chain, and which couples the oxidation of succinate to fumarate with the reduction of ubiquinone (coenzyme Q) to ubiquinol. Required for flavinylation (covalent attachment of FAD) of the flavoprotein subunit of the SDH catalytic dimer. In Drosophila melanogaster (Fruit fly), this protein is Succinate dehydrogenase assembly factor 2-B, mitochondrial.